The sequence spans 186 residues: Agglutinin isolectin 3 (186 aa).

The residue at position 1 (glutamine 1) is a Pyrrolidone carboxylic acid. Chitin-binding type-1 domains follow at residues 1-42, 43-85, 86-128, and 129-171; these read QRCG…ACWT, SKRC…PCRA, DIKC…ACST, and DKPC…GCDG. Cystine bridges form between cysteine 3–cysteine 18, cysteine 12–cysteine 24, cysteine 17–cysteine 31, cysteine 35–cysteine 40, cysteine 46–cysteine 61, cysteine 55–cysteine 67, cysteine 60–cysteine 74, cysteine 78–cysteine 83, cysteine 89–cysteine 104, cysteine 98–cysteine 110, cysteine 103–cysteine 117, cysteine 121–cysteine 126, cysteine 132–cysteine 147, cysteine 141–cysteine 153, cysteine 146–cysteine 160, and cysteine 164–cysteine 169. Residue 10–12 coordinates substrate; the sequence is MEC. 62–73 provides a ligand contact to substrate; sequence SQYGHCGFGAEY. 114-115 lines the substrate pocket; it reads SE. Residues 172-186 constitute a propeptide that is removed on maturation; that stretch reads VFAEAIATNSTLLAE. N-linked (GlcNAc...) asparagine glycosylation is present at asparagine 180.

As to quaternary structure, homodimer, u-shaped.

Functionally, N-acetyl-D-glucosamine / N-acetyl-D-neuraminic acid binding lectin. This Triticum aestivum (Wheat) protein is Agglutinin isolectin 3.